The primary structure comprises 873 residues: Tyrosine-protein kinase transforming protein Fps (873 aa).

Positions 1 to 46 (ASGQLHRPQPQEHTSTSAAAGTWRLTQASESRHRLPHCSAAPSHQD) are disordered. Residues 11–29 (QEHTSTSAAAGTWRLTQAS) show a composition bias toward polar residues. The region spanning 50–313 (MGFGPELWCP…AVEMIDPATE (264 aa)) is the F-BAR domain. The disordered stretch occupies residues 445 to 471 (GSEEPPPALPLQEDRQSARSTDQERSG). A compositionally biased stretch (basic and acidic residues) spans 456 to 469 (QEDRQSARSTDQER). In terms of domain architecture, SH2 spans 511 to 600 (WYHGAIPRSE…KSGIVLTRAV (90 aa)). A Protein kinase domain is found at 612 to 865 (VLLGERIGRG…PSFGAVHQDL (254 aa)). ATP is bound by residues 618 to 626 (IGRGNFGEV) and K641. D734 serves as the catalytic Proton acceptor. Y764 bears the Phosphotyrosine; by autocatalysis mark.

Belongs to the protein kinase superfamily. Tyr protein kinase family. Fes/fps subfamily.

The catalysed reaction is L-tyrosyl-[protein] + ATP = O-phospho-L-tyrosyl-[protein] + ADP + H(+). The chain is Tyrosine-protein kinase transforming protein Fps (V-FPS) from Gallus gallus (Chicken).